Reading from the N-terminus, the 270-residue chain is Regulatory protein RecX (270 aa).

The protein belongs to the RecX family.

The protein resides in the cytoplasm. Modulates RecA activity. The sequence is that of Regulatory protein RecX from Bacillus cereus (strain G9842).